The sequence spans 131 residues: Biogenesis of lysosome-related organelles complex 1 subunit 5 (131 aa).

This sequence belongs to the BLOC1S5 family. As to quaternary structure, component of the biogenesis of lysosome-related organelles complex-1 (BLOC-1) composed at least of blos-1, blos-2, blos-4, dsbn-1, glo-2, mutd-1 and snpn-1.

Its function is as follows. Component of the biogenesis of lysosome-related organelles complex-1 (BLOC-1) involved in gut granule biogenesis. This is Biogenesis of lysosome-related organelles complex 1 subunit 5 (mutd-1) from Caenorhabditis elegans.